A 958-amino-acid polypeptide reads, in one-letter code: SLIT and NTRK-like protein 5 (958 aa).

The N-terminal stretch at 1 to 40 is a signal peptide; it reads MHTCCPPVTLEQDLHRKMHSWMLQTLAFAVTSLVLSCAET. The Extracellular portion of the chain corresponds to 41–664; the sequence is IDYYGEICDN…GGGASSVPLS (624 aa). LRR repeat units lie at residues 82–103, 106–127, 130–151, 154–175, 178–199, and 201–222; these read PIYH…EFVN, GASI…AFHG, GLRR…TFLG, NLEY…AFGK, LLQV…LFRF, and PLTH…GLLQ. Asn-103 is a glycosylation site (N-linked (GlcNAc...) asparagine). In terms of domain architecture, LRRCT 1 spans 235 to 286; sequence NPWNCSCELISLKDWLDSISYSALVGDVVCETPFRLHGRDLDEVSKQELCPR. The interval 317-358 is disordered; the sequence is ATSSSAVYKPPLKPPKGTRQPNKPRVRPTSRQPSKDLGYSNY. The LRRNT domain maps to 365-407; sequence QTKSPVPLECPTACSCNLQISDLGLNVNCQERKIESIAELQPK. LRR repeat units follow at residues 410–431, 434–455, 458–479, 482–503, 506–527, and 529–550; these read NPKK…DFLE, GLDL…AFGD, NLRR…LFYG, SLQY…TFDP, NLQL…VFSG, and TLLR…GVLD. Residues 563–614 form the LRRCT 2 domain; that stretch reads NPWDCTCDIVGMKLWVEQLKVGVLVDEVICKAPKKFAETDMRSIKSELLCPD. Asn-644 carries N-linked (GlcNAc...) asparagine glycosylation. A helical membrane pass occupies residues 665-685; the sequence is VLILSLLLVFIMSVFVAAGLF. Topologically, residues 686-958 are cytoplasmic; it reads VLVMKRRKKN…LEKQTTFSQF (273 aa). The interval 789–844 is disordered; sequence NHHLQQQQQPPPPPQQPQQQPPPQLQLQPGEEERRESHHLRSPAYSVSTIEPREDL. A compositionally biased stretch (pro residues) spans 797 to 812; sequence QPPPPPQQPQQQPPPQ.

Belongs to the SLITRK family. In terms of tissue distribution, expressed predominantly in the cerebral cortex of the brain but also at low levels in the spinal cord and medulla.

It is found in the membrane. Its function is as follows. Suppresses neurite outgrowth. In Homo sapiens (Human), this protein is SLIT and NTRK-like protein 5 (SLITRK5).